Here is a 1096-residue protein sequence, read N- to C-terminus: Cation-transporting ATPase 5 (1096 aa).

Residues 1-19 lie on the Cytoplasmic side of the membrane; sequence MDSIELKQLVPENDSEPGT. The chain crosses the membrane as a helical span at residues 20–41; that stretch reads PRQLLFQHYDISNEETIGIKPF. Residues 42–47 are Lumenal-facing; the sequence is KSIPAK. A helical transmembrane segment spans residues 48–70; sequence VYILRVTEILTLGLLHLILTWLP. Over 71 to 193 the chain is Cytoplasmic; sequence EFRLKWIEAP…LVSTKKSIVT (123 aa). The helical transmembrane segment at 194-216 threads the bilayer; it reads ILLNEVLHPFYLFQAVSVLIWLC. Topologically, residues 217-220 are lumenal; sequence DSFV. The helical transmembrane segment at 221–238 threads the bilayer; sequence FYSCCIVFISSYSIFLSV. The Cytoplasmic segment spans residues 239 to 391; it reads KESKESENRI…NLRPSQLYLD (153 aa). A helical membrane pass occupies residues 392–412; it reads SMSFLKTMAILSFVSIVFIAI. The Lumenal segment spans residues 413–425; sequence YLNLYNASFGHVV. Residues 426–447 traverse the membrane as a helical segment; it reads LRSLDVLTILVPPALPATLSVG. At 448–895 the chain is on the cytoplasmic side; sequence IANSIARLSR…SLILSHRCFQ (448 aa). D480 serves as the catalytic 4-aspartylphosphate intermediate. Residues D838 and D842 each contribute to the Mg(2+) site. Residues 896 to 915 form a helical membrane-spanning segment; the sequence is YMVLCAIVQFSGVFFLYLKN. The Lumenal portion of the chain corresponds to 916–922; it reads YNFNDNQ. Residues 923 to 940 form a helical membrane-spanning segment; sequence FLFMDLLIIFPLSAAMSY. Topologically, residues 941 to 958 are cytoplasmic; sequence FDPAQNLTSNRPNSTLFG. The helical transmembrane segment at 959-982 threads the bilayer; it reads KGRVKDLGIQSVLIWLSHGLLTLI. Topologically, residues 983–1003 are lumenal; that stretch reads LHELNWVELPEWQLEKSNTKN. A helical membrane pass occupies residues 1004-1026; the sequence is VLVTSIFLLSSLQYLGICIGINQ. The Cytoplasmic segment spans residues 1027 to 1040; the sequence is SSEFLSPIWKKKTY. A helical membrane pass occupies residues 1041 to 1060; the sequence is VCLCTTIGLCNIYLCFANEN. The Lumenal segment spans residues 1061–1075; sequence HIISRCLQITRLPTL. The helical transmembrane segment at 1076–1096 threads the bilayer; that stretch reads YRFIILFMGVISCCLTSILNM.

Belongs to the cation transport ATPase (P-type) (TC 3.A.3) family. Type V subfamily.

The protein resides in the endoplasmic reticulum membrane. The protein localises to the golgi apparatus membrane. The catalysed reaction is ATP + H2O = ADP + phosphate + H(+). In terms of biological role, plays a role in regulating calcium and manganese homeostasis responsible for cell cycle progression. The polypeptide is Cation-transporting ATPase 5 (cta5) (Schizosaccharomyces pombe (strain 972 / ATCC 24843) (Fission yeast)).